Consider the following 199-residue polypeptide: Golgi to ER traffic protein 1 (199 aa).

At 1-11 the chain is on the lumenal side; sequence MLLPDLHPYTI. A helical transmembrane segment spans residues 12–31; that stretch reads LLSIFIVLLLKQLVASIGKS. Topologically, residues 32 to 115 are cytoplasmic; that stretch reads TIKEFVWLVY…SIDKVSNALL (84 aa). Residues 66–116 adopt a coiled-coil conformation; sequence EKRAISAQDEYAKWTKLNRQADKLSAELQKLNQEIQQQKASIDKVSNALLL. Residues 116–136 form a helical membrane-spanning segment; it reads LVLTTLPIWVARVLYRNTHLF. Residues 137–160 lie on the Lumenal side of the membrane; that stretch reads YIRQGIFPKYVEWVLALPFLPNGA. The helical transmembrane segment at 161–177 threads the bilayer; that stretch reads VGLTIWMFAVNSVVSNF. Residues 178-199 are Cytoplasmic-facing; the sequence is AFLVSFPFAKKVSKPVRDTKIE.

This sequence belongs to the WRB/GET1 family. Component of the Golgi to ER traffic (GET) complex, which is composed of GET1, GET2 and GET3. Within the complex, GET1 and GET2 form a heterotetramer which is stabilized by phosphatidylinositol binding and which binds to the GET3 homodimer.

The protein resides in the endoplasmic reticulum membrane. It is found in the golgi apparatus membrane. In terms of biological role, required for the post-translational delivery of tail-anchored (TA) proteins to the endoplasmic reticulum. Together with GET2, acts as a membrane receptor for soluble GET3, which recognizes and selectively binds the transmembrane domain of TA proteins in the cytosol. The GET complex cooperates with the HDEL receptor ERD2 to mediate the ATP-dependent retrieval of resident ER proteins that contain a C-terminal H-D-E-L retention signal from the Golgi to the ER. The sequence is that of Golgi to ER traffic protein 1 from Candida dubliniensis (strain CD36 / ATCC MYA-646 / CBS 7987 / NCPF 3949 / NRRL Y-17841) (Yeast).